Here is a 228-residue protein sequence, read N- to C-terminus: Glycosylphosphatidylinositol-anchored high density lipoprotein-binding protein 1 (228 aa).

The signal sequence occupies residues 1–22 (MKALRAVLLILLLSGQPGSGWA). Residues 21–32 (WAQEDGDADPEP) form a disordered region. Residues 24-48 (EDGDADPEPENYNYDDDDDEEEEEE) form an important for LPL transport to the lumenal surface of endothelial cells region. The span at 24-49 (EDGDADPEPENYNYDDDDDEEEEEET) shows a compositional bias: acidic residues. Y35 carries the sulfotyrosine modification. Residues 61–148 (LQCYFCQVLH…PWQNPQVQNP (88 aa)) form the UPAR/Ly6 domain. Cystine bridges form between C63–C88, C66–C75, C81–C109, C113–C129, and C130–C135. An N-linked (GlcNAc...) asparagine glycan is attached at N76. Residues 102–108 (LTTYSMW) are important for interaction with LPL. The segment at 145–200 (VQNPLGGRADSPLESGTRHPQGGKFSHPQVVKAAHPQSDGANLPKSGKANQPQGSG) is disordered. A lipid anchor (GPI-anchor amidated glycine) is attached at G198. The propeptide at 199 to 228 (SGAGYPSGWTKFGNIALLLSFFTCLWASGA) is removed in mature form.

In terms of assembly, mostly monomer, but also homodimer and homooligomer. Interacts with lipoprotein lipase (LPL). Interacts with high affinity with high-density lipoprotein (HDL). Interacts with chylomicrons. Interacts with APOA5. In terms of processing, glycosylation of Asn-76 is critical for cell surface localization. Sulfation of a Tyr in the N-terminal acidic region increases the affinity for LPL. Detected in fat tissue. Detected on the luminal surface of capillary endothelial cells in heart, skeletal muscle and brown adipose tissue (at protein level). Detected in heart and brown adipose tissue. Expressed at lower levels in lung and liver.

It is found in the apical cell membrane. It localises to the basolateral cell membrane. The protein resides in the cell membrane. Functionally, mediates the transport of lipoprotein lipase LPL from the basolateral to the apical surface of endothelial cells in capillaries. Anchors LPL on the surface of endothelial cells in the lumen of blood capillaries. Thereby, plays an important role in lipolytic processing of chylomicrons by LPL, triglyceride metabolism and lipid homeostasis. Binds chylomicrons and phospholipid particles that contain APOA5. Binds high-density lipoprotein (HDL) and plays a role in the uptake of lipids from HDL. The chain is Glycosylphosphatidylinositol-anchored high density lipoprotein-binding protein 1 from Mus musculus (Mouse).